A 416-amino-acid chain; its full sequence is Chromate transport protein (416 aa).

Residues 1-21 (MSVANEESYRPSKATDATTEA) form a disordered region. 11 consecutive transmembrane segments (helical) span residues 99–119 (LGGVLAGLGFMLPGFLLMFAL), 128–148 (FVGTALGAAFLGVQAAVIALI), 160–177 (LLDRWLWVIAIVCALAAI), 181–198 (DFWITLPAGGLVYALLVL), 204–224 (ALLVTLAAVALAAAVALWAAP), 237–257 (ASVLLIFASGLKAGLLTFGGA), 283–303 (LALSGVLPAPLIIFATFVGYV), 308–328 (IGAVAMTVGVFLPAFAFSLIF), 341–361 (LHAFLDGVAAGVVGLIGATTI), 371–391 (VPSLTVGMSIFAAGLAFLYAW), and 395–415 (LNVVVVILAAGLAGWLVFPNQ).

The protein belongs to the chromate ion transporter (CHR) (TC 2.A.51) family.

The protein localises to the cell inner membrane. Functionally, this protein reduces chromate accumulation and is essential for chromate resistance. This Pseudomonas aeruginosa protein is Chromate transport protein.